We begin with the raw amino-acid sequence, 192 residues long: Holliday junction branch migration complex subunit RuvA (192 aa).

The segment at Met1 to Leu61 is domain I. The segment at Ser62–Thr137 is domain II. Residues Thr137 to Ala140 are flexible linker. The domain III stretch occupies residues Asp141–Lys192.

Belongs to the RuvA family. In terms of assembly, homotetramer. Forms an RuvA(8)-RuvB(12)-Holliday junction (HJ) complex. HJ DNA is sandwiched between 2 RuvA tetramers; dsDNA enters through RuvA and exits via RuvB. An RuvB hexamer assembles on each DNA strand where it exits the tetramer. Each RuvB hexamer is contacted by two RuvA subunits (via domain III) on 2 adjacent RuvB subunits; this complex drives branch migration. In the full resolvosome a probable DNA-RuvA(4)-RuvB(12)-RuvC(2) complex forms which resolves the HJ.

The protein localises to the cytoplasm. Functionally, the RuvA-RuvB-RuvC complex processes Holliday junction (HJ) DNA during genetic recombination and DNA repair, while the RuvA-RuvB complex plays an important role in the rescue of blocked DNA replication forks via replication fork reversal (RFR). RuvA specifically binds to HJ cruciform DNA, conferring on it an open structure. The RuvB hexamer acts as an ATP-dependent pump, pulling dsDNA into and through the RuvAB complex. HJ branch migration allows RuvC to scan DNA until it finds its consensus sequence, where it cleaves and resolves the cruciform DNA. In Lactobacillus johnsonii (strain CNCM I-12250 / La1 / NCC 533), this protein is Holliday junction branch migration complex subunit RuvA.